We begin with the raw amino-acid sequence, 248 residues long: tRNA pseudouridine synthase A (248 aa).

Catalysis depends on Asp53, which acts as the Nucleophile. Residue Tyr111 coordinates substrate.

This sequence belongs to the tRNA pseudouridine synthase TruA family. Homodimer.

The enzyme catalyses uridine(38/39/40) in tRNA = pseudouridine(38/39/40) in tRNA. Its function is as follows. Formation of pseudouridine at positions 38, 39 and 40 in the anticodon stem and loop of transfer RNAs. The polypeptide is tRNA pseudouridine synthase A (Listeria innocua serovar 6a (strain ATCC BAA-680 / CLIP 11262)).